The following is a 107-amino-acid chain: Sperm-specific class P protein 34 (107 aa).

Positions 1–26 (MINVDPPTGNYPATGGNSTHNITSES) are disordered. The region spanning 1-107 (MINVDPPTGN…GEIIVKLIAA (107 aa)) is the MSP domain. Residues 15-25 (GGNSTHNITSE) show a composition bias toward polar residues.

Expressed at higher level in testis.

This chain is Sperm-specific class P protein 34 (ssp-34), found in Caenorhabditis elegans.